Here is a 317-residue protein sequence, read N- to C-terminus: Apolipoprotein E (317 aa).

The first 18 residues, 1–18, serve as a signal peptide directing secretion; sequence MKVLWAALLVTFLAGCQA. 8 repeat units span residues 80-101, 102-123, 124-145, 146-167, 168-189, 190-211, 212-233, and 234-255. The interval 80–255 is 8 X 22 AA approximate tandem repeats; the sequence is ALMDETMKEL…RLDEVKEQVA (176 aa). Residue Met-143 is modified to Methionine sulfoxide. Residue Ser-147 is modified to Phosphoserine. An LDL and other lipoprotein receptors binding region spans residues 158–168; it reads HLRKLRKRLLR. A heparin-binding site is contributed by 162-165; sequence LRKR. Residues 210 to 290 are lipid-binding and lipoprotein association; it reads AATVGSLAGQ…SWFEPLVEDM (81 aa). A heparin-binding site is contributed by 229–236; that stretch reads GERLRARM. Residues 266 to 317 form a homooligomerization region; it reads QQIRLQAEAFQARLKSWFEPLVEDMQRQWAGLVEKVQAAMGTSAAPVPSDNH. Residues 278-290 are specificity for association with VLDL; sequence RLKSWFEPLVEDM.

It belongs to the apolipoprotein A1/A4/E family. Homotetramer. May interact with ABCA1; functionally associated with ABCA1 in the biogenesis of HDLs. May interact with APP/A4 amyloid-beta peptide; the interaction is extremely stable in vitro but its physiological significance is unclear. May interact with MAPT. May interact with MAP2. In the cerebrospinal fluid, interacts with secreted SORL1. Interacts with PMEL; this allows the loading of PMEL luminal fragment on ILVs to induce fibril nucleation. APOE exists as multiple glycosylated and sialylated glycoforms within cells and in plasma. The extent of glycosylation and sialylation are tissue and context specific. Post-translationally, glycated in plasma VLDL. In terms of processing, phosphorylated by FAM20C in the extracellular medium.

The protein localises to the secreted. It localises to the extracellular space. The protein resides in the extracellular matrix. It is found in the extracellular vesicle. Its subcellular location is the endosome. The protein localises to the multivesicular body. Functionally, APOE is an apolipoprotein, a protein associating with lipid particles, that mainly functions in lipoprotein-mediated lipid transport between organs via the plasma and interstitial fluids. APOE is a core component of plasma lipoproteins and is involved in their production, conversion and clearance. Apolipoproteins are amphipathic molecules that interact both with lipids of the lipoprotein particle core and the aqueous environment of the plasma. As such, APOE associates with chylomicrons, chylomicron remnants, very low density lipoproteins (VLDL) and intermediate density lipoproteins (IDL) but shows a preferential binding to high-density lipoproteins (HDL). It also binds a wide range of cellular receptors including the LDL receptor/LDLR, the LDL receptor-related proteins LRP1, LRP2 and LRP8 and the very low-density lipoprotein receptor/VLDLR that mediate the cellular uptake of the APOE-containing lipoprotein particles. Finally, APOE also has a heparin-binding activity and binds heparan-sulfate proteoglycans on the surface of cells, a property that supports the capture and the receptor-mediated uptake of APOE-containing lipoproteins by cells. A main function of APOE is to mediate lipoprotein clearance through the uptake of chylomicrons, VLDLs, and HDLs by hepatocytes. APOE is also involved in the biosynthesis by the liver of VLDLs as well as their uptake by peripheral tissues ensuring the delivery of triglycerides and energy storage in muscle, heart and adipose tissues. By participating in the lipoprotein-mediated distribution of lipids among tissues, APOE plays a critical role in plasma and tissues lipid homeostasis. APOE is also involved in two steps of reverse cholesterol transport, the HDLs-mediated transport of cholesterol from peripheral tissues to the liver, and thereby plays an important role in cholesterol homeostasis. First, it is functionally associated with ABCA1 in the biogenesis of HDLs in tissues. Second, it is enriched in circulating HDLs and mediates their uptake by hepatocytes. APOE also plays an important role in lipid transport in the central nervous system, regulating neuron survival and sprouting. The polypeptide is Apolipoprotein E (APOE) (Gorilla gorilla gorilla (Western lowland gorilla)).